A 309-amino-acid chain; its full sequence is Ribonuclease Z (309 aa).

Zn(2+)-binding residues include histidine 63, histidine 65, aspartate 67, histidine 68, histidine 145, aspartate 216, and histidine 274. The Proton acceptor role is filled by aspartate 67.

The protein belongs to the RNase Z family. Homodimer. It depends on Zn(2+) as a cofactor.

The enzyme catalyses Endonucleolytic cleavage of RNA, removing extra 3' nucleotides from tRNA precursor, generating 3' termini of tRNAs. A 3'-hydroxy group is left at the tRNA terminus and a 5'-phosphoryl group is left at the trailer molecule.. Functionally, zinc phosphodiesterase, which displays some tRNA 3'-processing endonuclease activity. Probably involved in tRNA maturation, by removing a 3'-trailer from precursor tRNA. The chain is Ribonuclease Z from Streptococcus pneumoniae serotype 2 (strain D39 / NCTC 7466).